The chain runs to 272 residues: 3-methyl-2-oxobutanoate hydroxymethyltransferase (272 aa).

Residues aspartate 51 and aspartate 90 each coordinate Mg(2+). 3-methyl-2-oxobutanoate is bound by residues 51–52, aspartate 90, and lysine 119; that span reads DS. Glutamate 121 contacts Mg(2+). The active-site Proton acceptor is the glutamate 188.

It belongs to the PanB family. In terms of assembly, homodecamer; pentamer of dimers. Mg(2+) is required as a cofactor.

The protein localises to the cytoplasm. It carries out the reaction 3-methyl-2-oxobutanoate + (6R)-5,10-methylene-5,6,7,8-tetrahydrofolate + H2O = 2-dehydropantoate + (6S)-5,6,7,8-tetrahydrofolate. It functions in the pathway cofactor biosynthesis; (R)-pantothenate biosynthesis; (R)-pantoate from 3-methyl-2-oxobutanoate: step 1/2. Its function is as follows. Catalyzes the reversible reaction in which hydroxymethyl group from 5,10-methylenetetrahydrofolate is transferred onto alpha-ketoisovalerate to form ketopantoate. The protein is 3-methyl-2-oxobutanoate hydroxymethyltransferase of Dechloromonas aromatica (strain RCB).